We begin with the raw amino-acid sequence, 119 residues long: Thrombin-like enzyme TLBan (119 aa).

Residues Val-1–Ala-112 form the Peptidase S1 domain. Active-site charge relay system residues include His-40 and Asp-59. Cys-54 and Cys-118 are disulfide-bonded.

Monomer. Post-translationally, contains both N-linked carbohydrates and sialic acid. As to expression, expressed by the venom gland.

It localises to the secreted. Its activity is regulated as follows. Strongly inhibited by PMSF and slightly inhibited by EDTA and soybean trypsin inhibitor. Its function is as follows. Thrombin-like snake venom serine protease, with high clotting activity in vitro. Also has fibrinogenolytic ability, showing a fast degradation of fibrinogen Aalpha chain (FGA), a slow degradation of Bbeta chain (FGB) and no degradation of gamma chain. Also causes platelet aggregation in platelet rich plasma (PRP) and washed platelet suspension. The polypeptide is Thrombin-like enzyme TLBan (Bothrocophias andianus (Andean lancehead)).